Consider the following 40-residue polypeptide: Photosystem II reaction center protein J (40 aa).

A helical membrane pass occupies residues I8–F28.

It belongs to the PsbJ family. In terms of assembly, PSII is composed of 1 copy each of membrane proteins PsbA, PsbB, PsbC, PsbD, PsbE, PsbF, PsbH, PsbI, PsbJ, PsbK, PsbL, PsbM, PsbT, PsbX, PsbY, PsbZ, Psb30/Ycf12, at least 3 peripheral proteins of the oxygen-evolving complex and a large number of cofactors. It forms dimeric complexes.

The protein localises to the plastid. The protein resides in the chloroplast thylakoid membrane. Functionally, one of the components of the core complex of photosystem II (PSII). PSII is a light-driven water:plastoquinone oxidoreductase that uses light energy to abstract electrons from H(2)O, generating O(2) and a proton gradient subsequently used for ATP formation. It consists of a core antenna complex that captures photons, and an electron transfer chain that converts photonic excitation into a charge separation. This chain is Photosystem II reaction center protein J, found in Huperzia lucidula (Shining clubmoss).